Consider the following 865-residue polypeptide: Protein translocase subunit SecA (865 aa).

ATP-binding positions include Q85, 103–107 (GEGKT), and D505. Residues C847, C849, C858, and H859 each coordinate Zn(2+).

This sequence belongs to the SecA family. In terms of assembly, monomer and homodimer. Part of the essential Sec protein translocation apparatus which comprises SecA, SecYEG and auxiliary proteins SecDF. Other proteins may also be involved. The cofactor is Zn(2+).

The protein localises to the cell membrane. Its subcellular location is the cytoplasm. The catalysed reaction is ATP + H2O + cellular proteinSide 1 = ADP + phosphate + cellular proteinSide 2.. Part of the Sec protein translocase complex. Interacts with the SecYEG preprotein conducting channel. Has a central role in coupling the hydrolysis of ATP to the transfer of proteins into and across the cell membrane, serving as an ATP-driven molecular motor driving the stepwise translocation of polypeptide chains across the membrane. The sequence is that of Protein translocase subunit SecA from Lactococcus lactis subsp. cremoris (strain SK11).